The chain runs to 293 residues: Nucleotide-binding protein BCG9842_B5683 (293 aa).

14–21 (GMSGAGKT) serves as a coordination point for ATP. Residue 65–68 (DLRG) participates in GTP binding.

The protein belongs to the RapZ-like family.

In terms of biological role, displays ATPase and GTPase activities. The chain is Nucleotide-binding protein BCG9842_B5683 from Bacillus cereus (strain G9842).